Here is an 882-residue protein sequence, read N- to C-terminus: MGPWSRSLSALCCCCRCNPWLCREPEPCIPGFGAESYTFTVPRRNLERGRVLGRVSFEGCAGLPRTVYVSDDTRFKVHTDGVLTVRRPVHLHRPELSFLVHAWDSTHRKLSTKVTLEVSAHHHHHHSHHDSPSGTQTEVLTFPGPHHGLRRQKRDWVIPPISCPENEKGPFPKSLVQIKSNKEKETQVFYSITGQRADTPPVGVFIIERETGWLKVTQPLDREQIAKYILFSHAVSSNGQAIEEPMEIVITVTDQNDNKPQFTQEVFKASALEGALPGTSVMQVTATDIDDEVNTYTAAIGYTIPAQDPMLPHNKMFTINKETGVISVLTTGLDRESFPTYTLMVQAADLNGEGLSTTATAVITVLDTNDNAPRFNPTTYVGSVPENEANVAITTLTVTDADDPNTPAWEAVYTVLNDNEKQFIVVTDPVTNEGTLKTAKGLDFEAKQQYILYVAVTNVAPFEVTLPTSTATVTVDVIDVNEAPIFVPPQKRVEVPEDFGVGLEITSYTAREPDTFMEQKITYRIWRDTANWLEINPETGAISTRAELDREDVDHVKNSTYTALIIATDNGSPPATGTGTLLLFLDDVNDNGPVPEPRTMDFCQRNPEPHIININDPDLPPNTSPFTAELTHGASVNWTIEYNDQERESLILKPKKTLELGDHKINLKLIDNQNKDQVTTLDVHVCDCDGIVSNCRKARPAEAGLQVPAILGILGGILAFLILILLLLLLVRRRRVVKEPLLPPEDDTRDNVYYYDEEGGGEEDQDFDLSQLHRGLDARPEVTRNDVAPTLMSVPQYRPRPANPDEIGNFIDENLKAADSDPTAPPYDSLLVFDYEGSGSEAATLSSLNSSESDQDQDYDYLNEWGNRFKKLADMYGGGEDD.

The signal sequence occupies residues 1 to 23; sequence MGPWSRSLSALCCCCRCNPWLCR. The propeptide occupies 24 to 154; the sequence is EPEPCIPGFG…PHHGLRRQKR (131 aa). The segment at 117–137 is disordered; the sequence is EVSAHHHHHHSHHDSPSGTQT. Cadherin domains follow at residues 154–262, 263–375, 376–486, 487–595, and 594–702; these read RDWV…KPQF, TQEV…APRF, NPTT…APIF, VPPQ…GPVP, and VPEP…RPAE. Residues 155-709 are Extracellular-facing; the sequence is DWVIPPISCP…PAEAGLQVPA (555 aa). Ser280 carries O-linked (Man...) serine glycosylation. Residues Thr285, Thr358, Thr470, Thr472, and Thr509 are each glycosylated (O-linked (Man...) threonine). Residue Asn558 is glycosylated (N-linked (GlcNAc...) asparagine). Residues Thr576, Thr578, and Thr580 are each glycosylated (O-linked (Man...) threonine). Asn637 carries an N-linked (GlcNAc...) asparagine glycan. The chain crosses the membrane as a helical span at residues 710–730; it reads ILGILGGILAFLILILLLLLL. The Cytoplasmic segment spans residues 731-882; that stretch reads VRRRRVVKEP…ADMYGGGEDD (152 aa). A disordered region spans residues 747–767; it reads DTRDNVYYYDEEGGGEEDQDF. 3 positions are modified to phosphotyrosine; by SRC: Tyr753, Tyr754, and Tyr755. A compositionally biased stretch (acidic residues) spans 755–767; it reads YDEEGGGEEDQDF. The interval 758-769 is required for binding CTNND1 and PSEN1; the sequence is EGGGEEDQDFDL. Phosphoserine occurs at positions 770, 793, 838, 840, and 846. Positions 811–882 are required for binding alpha, beta and gamma catenins; sequence IDENLKAADS…ADMYGGGEDD (72 aa).

Homodimer; disulfide-linked. Component of an E-cadherin/ catenin adhesion complex composed of at least E-cadherin/CDH1, beta-catenin/CTNNB1 or gamma-catenin/JUP, and potentially alpha-catenin/CTNNA1; the complex is located to adherens junctions. Found in a complex composed of CDH1, RAP1A and PKP3; PKP3 acts as a scaffold protein within the complex, the complex is required for CDH1 localization to mature desmosome cell junctions. Interacts with the TRPV4 and CTNNB1 complex. Interacts with CTNND1. The stable association of CTNNA1 is controversial as CTNNA1 was shown not to bind to F-actin when assembled in the complex. Alternatively, the CTNNA1-containing complex may be linked to F-actin by other proteins such as LIMA1. Interaction with PSEN1, cleaves CDH1 resulting in the disassociation of cadherin-based adherens junctions (CAJs). Interacts with AJAP1 and DLGAP5. Interacts with TBC1D2. Interacts with CAV1. Interacts with PIP5K1C. Interacts with RAB8B. Interacts with DDR1; this stabilizes CDH1 at the cell surface and inhibits its internalization. Interacts with RAPGEF2. Interacts with KLRG1. Forms a ternary complex composed of ADAM10, CADH1 and EPHA4; within the complex, CADH1 is cleaved by ADAM10 which disrupts adherens junctions. Interacts with SPEF1. Interacts with CTNNB1 and PKP2. Interacts with AMOTL2; the interaction may facilitate binding of radial actin fibers to cell junction complexes. Interacts with DSG3; the interaction is required for CDH1 localization to developing adherens junctions. In terms of processing, during apoptosis or with calcium influx, cleaved by a membrane-bound metalloproteinase (ADAM10), PS1/gamma-secretase and caspase-3. Processing by the metalloproteinase, induced by calcium influx, causes disruption of cell-cell adhesion and the subsequent release of beta-catenin into the cytoplasm. The residual membrane-tethered cleavage product is rapidly degraded via an intracellular proteolytic pathway. Cleavage by caspase-3 releases the cytoplasmic tail resulting in disintegration of the actin microfilament system. The gamma-secretase-mediated cleavage promotes disassembly of adherens junctions. During development of the cochlear organ of Corti, cleavage by ADAM10 at adherens junctions promotes pillar cell separation. N-glycosylation at Asn-637 is essential for expression, folding and trafficking. Addition of bisecting N-acetylglucosamine by MGAT3 modulates its cell membrane location. Post-translationally, ubiquitinated by a SCF complex containing SKP2, which requires prior phosphorylation by CK1/CSNK1A1. Ubiquitinated by CBLL1/HAKAI, requires prior phosphorylation at Tyr-754. In terms of processing, O-glycosylated. O-manosylated by TMTC1, TMTC2, TMTC3 or TMTC4. Thr-285 and Thr-509 are O-mannosylated by TMTC2 or TMTC4 but not TMTC1 or TMTC3.

It is found in the cell junction. It localises to the adherens junction. The protein resides in the cell membrane. The protein localises to the endosome. Its subcellular location is the golgi apparatus. It is found in the trans-Golgi network. It localises to the cytoplasm. The protein resides in the desmosome. In terms of biological role, cadherins are calcium-dependent cell adhesion proteins. They preferentially interact with themselves in a homophilic manner in connecting cells; cadherins may thus contribute to the sorting of heterogeneous cell types. CDH1 is involved in mechanisms regulating cell-cell adhesions, mobility and proliferation of epithelial cells. Promotes organization of radial actin fiber structure and cellular response to contractile forces, via its interaction with AMOTL2 which facilitates anchoring of radial actin fibers to CDH1 junction complexes at the cell membrane. Plays a role in the early stages of desmosome cell-cell junction formation via facilitating the recruitment of DSG2 and DSP to desmosome plaques. Has a potent invasive suppressor role. It is a ligand for integrin alpha-E/beta-7. Its function is as follows. E-Cad/CTF2 promotes non-amyloidogenic degradation of Abeta precursors. Has a strong inhibitory effect on APP C99 and C83 production. The polypeptide is Cadherin-1 (CDH1) (Bos taurus (Bovine)).